We begin with the raw amino-acid sequence, 514 residues long: MQQLNPSEISDIIKQRIEKLDVASEARNEGTVVSVSDGIVKIHGLADAMFGEMIEFPGSIFGMVLNLERDSVGAVVLGDYLQLEEGMTAQCTGRILEVPVGPELIGRVVDPLGVPIDGKGELDTKLTDAVEKVAPGVITRQSVDEPIQTGLKSIDAMVPIGRGQRELIIGDRQIGKSAIAIDTIINQKGKGVTCVYVAIGQKQSTIANVVRKLEEHGAMEHTIVVAAGAADPAPMQFLAAYSGCTMGEYFRDRGEDALIVYDDLSKQAVAYRQVSLLLRRPPGREAYPGDVFYLHSRLLERAARVNADHVEKLTNGEVKGKTGSLTALPIIETQGGDVSAFVPTNVISITDGQIFLETNLFNSGVRPAINAGLSVSRVGGSAQTKIIKKLGGSVRLALAQYRELAAFSQFASDLDEATRKQLEHGQRVTELMKQNQYSPLSVAEMAVSLYAANEGFLDDVEVSKVLDFERALHAYMKSEHAELLDKINQSGGYDDEIQQGLKSGLETFKSTQTW.

170 to 177 (GDRQIGKS) lines the ATP pocket.

This sequence belongs to the ATPase alpha/beta chains family. In terms of assembly, F-type ATPases have 2 components, CF(1) - the catalytic core - and CF(0) - the membrane proton channel. CF(1) has five subunits: alpha(3), beta(3), gamma(1), delta(1), epsilon(1). CF(0) has three main subunits: a(1), b(2) and c(9-12). The alpha and beta chains form an alternating ring which encloses part of the gamma chain. CF(1) is attached to CF(0) by a central stalk formed by the gamma and epsilon chains, while a peripheral stalk is formed by the delta and b chains.

The protein localises to the cell inner membrane. The enzyme catalyses ATP + H2O + 4 H(+)(in) = ADP + phosphate + 5 H(+)(out). In terms of biological role, produces ATP from ADP in the presence of a proton gradient across the membrane. The alpha chain is a regulatory subunit. In Chromohalobacter salexigens (strain ATCC BAA-138 / DSM 3043 / CIP 106854 / NCIMB 13768 / 1H11), this protein is ATP synthase subunit alpha.